Reading from the N-terminus, the 262-residue chain is Acyl-[acyl-carrier-protein]--UDP-N-acetylglucosamine O-acyltransferase (262 aa).

Belongs to the transferase hexapeptide repeat family. LpxA subfamily. In terms of assembly, homotrimer.

The protein resides in the cytoplasm. The enzyme catalyses a (3R)-hydroxyacyl-[ACP] + UDP-N-acetyl-alpha-D-glucosamine = a UDP-3-O-[(3R)-3-hydroxyacyl]-N-acetyl-alpha-D-glucosamine + holo-[ACP]. Its pathway is glycolipid biosynthesis; lipid IV(A) biosynthesis; lipid IV(A) from (3R)-3-hydroxytetradecanoyl-[acyl-carrier-protein] and UDP-N-acetyl-alpha-D-glucosamine: step 1/6. Involved in the biosynthesis of lipid A, a phosphorylated glycolipid that anchors the lipopolysaccharide to the outer membrane of the cell. This chain is Acyl-[acyl-carrier-protein]--UDP-N-acetylglucosamine O-acyltransferase, found in Shigella dysenteriae serotype 1 (strain Sd197).